The following is an 874-amino-acid chain: Isopimaradiene synthase, chloroplastic (874 aa).

Polar residues predominate over residues Met1–Ile12. The segment at Met1–Thr20 is disordered. A chloroplast-targeting transit peptide spans Met1 to Ser37. The Mg(2+) site is built by Asp407, Asp409, Asp626, Asp630, Asn770, and Glu778. The DXDD motif signature appears at Asp407–Asp410. Positions Asp626–Asp630 match the DDXXD motif motif.

It belongs to the terpene synthase family. Tpsd subfamily. Mg(2+) is required as a cofactor. Mn(2+) serves as cofactor.

The protein resides in the plastid. It is found in the chloroplast. The catalysed reaction is (+)-copalyl diphosphate = isopimara-8(14),15-diene + diphosphate. Its pathway is terpene metabolism; oleoresin biosynthesis. Functionally, terpene synthase (TPS) involved in the biosynthesis of diterpene natural products included in conifer oleoresin secretions and volatile emissions; these compounds contribute to biotic and abiotic stress defense against herbivores and pathogens. Catalyzes the conversion of (+)-copalyl diphosphate ((+)-CPP) to isopimaradiene. This Picea sitchensis (Sitka spruce) protein is Isopimaradiene synthase, chloroplastic.